Reading from the N-terminus, the 130-residue chain is Small ribosomal subunit protein uS9 (130 aa).

Residues 111 to 130 (VERKKVGLRKARRRPQFSKR) form a disordered region. Residues 116 to 130 (VGLRKARRRPQFSKR) show a composition bias toward basic residues.

This sequence belongs to the universal ribosomal protein uS9 family.

In Enterobacter sp. (strain 638), this protein is Small ribosomal subunit protein uS9.